The following is a 127-amino-acid chain: Fluoride-specific ion channel FluC (127 aa).

4 helical membrane passes run A3–V23, G36–A56, V72–I92, and F101–L121. Residues G76 and T79 each contribute to the Na(+) site.

The protein belongs to the fluoride channel Fluc/FEX (TC 1.A.43) family.

It is found in the cell inner membrane. It catalyses the reaction fluoride(in) = fluoride(out). With respect to regulation, na(+) is not transported, but it plays an essential structural role and its presence is essential for fluoride channel function. Fluoride-specific ion channel. Important for reducing fluoride concentration in the cell, thus reducing its toxicity. In Phenylobacterium zucineum (strain HLK1), this protein is Fluoride-specific ion channel FluC.